A 134-amino-acid polypeptide reads, in one-letter code: MKLSSVIPWALLLSTATVDSMDWLPRNTNCGGILKEESGVIATYYGPKTNCVWTIQMPPEYHVRVSIQYLQLNCNKESLEIIDGLPGSPVLGKICEGSLMDYRSSGSIMTVKYIREPEHPASFYEVLYFQDPQA.

Positions 1–20 (MKLSSVIPWALLLSTATVDS) are cleaved as a signal peptide. Disulfide bonds link Cys-30-Cys-51 and Cys-74-Cys-95. One can recognise a CUB domain in the interval 30–131 (CGGILKEESG…SFYEVLYFQD (102 aa)).

The protein belongs to the spermadhesin family. As to expression, seminal vesicle tissue, ampulla and weakly in tissue of epididymis.

The protein resides in the secreted. Functionally, stimulates cell division and progesterone secretion of bovine granulosa cells in vitro in a potent and dose dependent manner. This protein appears to be a potent growth factor with effects on ovarian granulosa cells. The polypeptide is Spermadhesin-1 (SPADH1) (Bos taurus (Bovine)).